The chain runs to 705 residues: Translation factor GUF1 homolog, mitochondrial (705 aa).

A mitochondrion-targeting transit peptide spans methionine 1–leucine 20. Residues proline 72–glycine 92 are disordered. Polar residues predominate over residues asparagine 76–glutamate 90. The tr-type G domain maps to asparagine 105–lysine 288. GTP-binding positions include alanine 114–serine 121, aspartate 181–histidine 185, and asparagine 235–aspartate 238.

Belongs to the TRAFAC class translation factor GTPase superfamily. Classic translation factor GTPase family. LepA subfamily.

It is found in the mitochondrion inner membrane. It catalyses the reaction GTP + H2O = GDP + phosphate + H(+). Its function is as follows. Promotes mitochondrial protein synthesis. May act as a fidelity factor of the translation reaction, by catalyzing a one-codon backward translocation of tRNAs on improperly translocated ribosomes. Binds to mitochondrial ribosomes in a GTP-dependent manner. This Babesia bovis protein is Translation factor GUF1 homolog, mitochondrial.